The following is a 201-amino-acid chain: Recombination protein RecR (201 aa).

A C4-type zinc finger spans residues 60–75; that stretch reads CSTCGNVDTADPCMIC. Positions 83 to 178 constitute a Toprim domain; the sequence is GTIIVVEDVS…KVTRLAHGVP (96 aa).

Belongs to the RecR family.

In terms of biological role, may play a role in DNA repair. It seems to be involved in an RecBC-independent recombinational process of DNA repair. It may act with RecF and RecO. This Mesorhizobium japonicum (strain LMG 29417 / CECT 9101 / MAFF 303099) (Mesorhizobium loti (strain MAFF 303099)) protein is Recombination protein RecR.